The sequence spans 120 residues: NAD(P)H-quinone oxidoreductase subunit 3 (120 aa).

3 helical membrane-spanning segments follow: residues 7-27, 64-84, and 89-109; these read YEYVLGFLLACSLIPILALTA, MFALVFVVFDVETVFLYPWAV, and LGLLAFVEALIFIAILVVALV.

The protein belongs to the complex I subunit 3 family. As to quaternary structure, NDH-1 can be composed of about 15 different subunits; different subcomplexes with different compositions have been identified which probably have different functions.

The protein localises to the cellular thylakoid membrane. It carries out the reaction a plastoquinone + NADH + (n+1) H(+)(in) = a plastoquinol + NAD(+) + n H(+)(out). The catalysed reaction is a plastoquinone + NADPH + (n+1) H(+)(in) = a plastoquinol + NADP(+) + n H(+)(out). Functionally, NDH-1 shuttles electrons from an unknown electron donor, via FMN and iron-sulfur (Fe-S) centers, to quinones in the respiratory and/or the photosynthetic chain. The immediate electron acceptor for the enzyme in this species is believed to be plastoquinone. Couples the redox reaction to proton translocation, and thus conserves the redox energy in a proton gradient. Cyanobacterial NDH-1 also plays a role in inorganic carbon-concentration. The sequence is that of NAD(P)H-quinone oxidoreductase subunit 3 from Crocosphaera subtropica (strain ATCC 51142 / BH68) (Cyanothece sp. (strain ATCC 51142)).